The primary structure comprises 253 residues: N-acetylglucosaminyl-phosphatidylinositol de-N-acetylase (253 aa).

A helical membrane pass occupies residues 3 to 23 (VAAPLLCLAAAVLVWGVLWVW). Residues 24-253 (GSWERMTRPE…YMRINSLNFL (230 aa)) lie on the Cytoplasmic side of the membrane.

It belongs to the PIGL family.

It localises to the endoplasmic reticulum membrane. The enzyme catalyses a 6-(N-acetyl-alpha-D-glucosaminyl)-1-(1,2-diacyl-sn-glycero-3-phospho)-1D-myo-inositol + H2O = a 6-(alpha-D-glucosaminyl)-1-(1,2-diacyl-sn-glycero-3-phospho)-1D-myo-inositol + acetate. The protein operates within glycolipid biosynthesis; glycosylphosphatidylinositol-anchor biosynthesis. In terms of biological role, catalyzes the second step of glycosylphosphatidylinositol (GPI) biosynthesis, which is the de-N-acetylation of N-acetylglucosaminyl-phosphatidylinositol. The sequence is that of N-acetylglucosaminyl-phosphatidylinositol de-N-acetylase (PIGL) from Bos taurus (Bovine).